Here is a 374-residue protein sequence, read N- to C-terminus: Histidinol-phosphate aminotransferase (374 aa).

At Lys211 the chain carries N6-(pyridoxal phosphate)lysine. Residues 351-368 are compositionally biased toward low complexity; that stretch reads GNSSQDSASKSNSSANND. Residues 351-374 are disordered; it reads GNSSQDSASKSNSSANNDELNASN.

The protein belongs to the class-II pyridoxal-phosphate-dependent aminotransferase family. Histidinol-phosphate aminotransferase subfamily. Homodimer. Pyridoxal 5'-phosphate serves as cofactor.

It carries out the reaction L-histidinol phosphate + 2-oxoglutarate = 3-(imidazol-4-yl)-2-oxopropyl phosphate + L-glutamate. It functions in the pathway amino-acid biosynthesis; L-histidine biosynthesis; L-histidine from 5-phospho-alpha-D-ribose 1-diphosphate: step 7/9. This Photobacterium profundum (strain SS9) protein is Histidinol-phosphate aminotransferase.